We begin with the raw amino-acid sequence, 120 residues long: MLRKCSDKQRKRMKRKVHIRKRVYGTAVRPRMTVFRSNRNISVQVIDDDARSTLASVSTLEKDFVLLRANVSSGLQIGEEIGRRLLEKHIDTVIFDRNGYLYHGVVAAVADGARKAGVKF.

The protein belongs to the universal ribosomal protein uL18 family. In terms of assembly, part of the 50S ribosomal subunit; part of the 5S rRNA/L5/L18/L25 subcomplex. Contacts the 5S and 23S rRNAs.

This is one of the proteins that bind and probably mediate the attachment of the 5S RNA into the large ribosomal subunit, where it forms part of the central protuberance. In Treponema pallidum (strain Nichols), this protein is Large ribosomal subunit protein uL18.